We begin with the raw amino-acid sequence, 733 residues long: Hexamerin (733 aa).

The signal sequence occupies residues 1 to 17 (MKTALVLILATATLAVA). N199, N234, and N431 each carry an N-linked (GlcNAc...) asparagine glycan.

Belongs to the hemocyanin family. In terms of assembly, homohexamer.

The protein localises to the secreted. The protein resides in the extracellular space. Functionally, larval storage protein (LSP) which may serve as a store of amino acids for synthesis of adult proteins. The chain is Hexamerin from Blaberus discoidalis (Tropical cockroach).